We begin with the raw amino-acid sequence, 499 residues long: MRSSLAPAIRLMQSVSRDSCYRGFIIVMTFLFYTCYHMSRKPISIVKGQLHRNCSALPSPPNISANDTTWCSWAPFENSNYKELLGSLDTAFLVSYAIGMFFSGIFGERLPLRYYLSGGMIICGIFTSFMGLGYYWNIHALWYYILFQILNGLAQTTGWPSVVTCMGNWFGKGKRGFIMGIWNSHTAVGNILGSLIAGAFVSTAWGLSFIVPGIIIAAFGIFCFFFLVEYPEDVGCTPPQQPEDTKENLEDMPVSYNSTDTICKSTESNEDDSGNAHTETEHPQAISFFGALRIPGVVEFSLCLLFAKLVSYTFLYWLPLYIANDAQFDPKAAGDLSTLFDVGGIIGGILAGGISDYTGKSAITCTIMLILTAPMLFIYNYLGQTGVSTTVAMLIVCGILVNGPYSLITTAVSADLGTHESLQGNAKALSTVTAIIDGSGSIGAALGPSLAGVLSSRGWNYVFYMLIAADICACLLLVRLVYKEIRTLCGGMRKSYTEM.

Residues 21-40 form a helical membrane-spanning segment; the sequence is YRGFIIVMTFLFYTCYHMSR. 3 N-linked (GlcNAc...) asparagine glycosylation sites follow: N53, N62, and N66. 11 consecutive transmembrane segments (helical) span residues 86–106, 116–136, 138–158, 187–207, 208–228, 302–322, 334–354, 362–382, 391–411, 434–454, and 458–478; these read GSLD…SGIF, LSGG…GYYW, IHAL…QTTG, AVGN…AWGL, SFIV…FFLV, LCLL…PLYI, GDLS…AGGI, AITC…YNYL, VAML…ITTA, AIID…AGVL, and GWNY…LLLV.

The protein belongs to the major facilitator superfamily. Organophosphate:Pi antiporter (OPA) (TC 2.A.1.4) family.

It is found in the endoplasmic reticulum membrane. It carries out the reaction D-glucose 6-phosphate(in) + phosphate(out) = D-glucose 6-phosphate(out) + phosphate(in). In terms of biological role, inorganic phosphate and glucose-6-phosphate antiporter. May transport cytoplasmic glucose-6-phosphate into the lumen of the endoplasmic reticulum and translocate inorganic phosphate into the opposite direction. The sequence is that of Glucose-6-phosphate exchanger SLC37A2 from Xenopus tropicalis (Western clawed frog).